Here is a 140-residue protein sequence, read N- to C-terminus: Desampylase (140 aa).

In terms of domain architecture, MPN spans 13–133; it reads TLIIPQHYLR…WILSEKNKIS (121 aa). Glu34 acts as the Proton donor/acceptor in catalysis. 3 residues coordinate Zn(2+): His88, His90, and Asp101. The JAMM motif signature appears at 88 to 101; that stretch reads HSHIACPPIPSGKD.

Belongs to the peptidase M67B family. Exists in two major states: monomer and homodimer. Both conformational states are catalytically active. Zn(2+) serves as cofactor. Post-translationally, the disulfide bridge probably stabilizes the PfJAMM1 homodimer at the optimal growth temperature of the hyperthermophile.

It catalyses the reaction an N(6)-[small archaeal modifier protein]-[protein]-L-lysine + H2O = a [protein]-L-lysine + a [small archaeal modifier protein].. Its activity is regulated as follows. Inhibited by EDTA in vitro. Its function is as follows. Metalloprotease that displays desampylase (DSAMP) activity, cleaving ubiquitin-like small archaeal modifier proteins (SAMP1, SAMP2 and SAMP3) from protein conjugates (isopeptide- and linear-linked). Thus, likely regulates sampylation and the pools of 'free' SAMP available for protein modification. In vitro, is also able to cleave non-physiological ubiquitin (Ub) substrates, such as 'Met1-', 'Lys48-', and 'Lys63'-linked Ub dimers (Ub2), and to remove Ub tags from diverse proteins. The chain is Desampylase from Pyrococcus furiosus (strain ATCC 43587 / DSM 3638 / JCM 8422 / Vc1).